The primary structure comprises 124 residues: Urotensin-2 (124 aa).

An N-terminal signal peptide occupies residues 1 to 20 (MYKLASCCLLFIGFLNPLLS). The propeptide occupies 21-110 (LPLLDSREIS…HLLARIWKPY (90 aa)). Cysteine 118 and cysteine 123 are oxidised to a cystine.

Belongs to the urotensin-2 family. Brain specific.

Its subcellular location is the secreted. Highly potent vasoconstrictor. In Homo sapiens (Human), this protein is Urotensin-2 (UTS2).